Consider the following 443-residue polypeptide: Differentially expressed in FDCP 8 homolog A (443 aa).

The segment at 1–49 (MEYDDKLVRFRQGHLNPFDKQGGAERHPADSEAQPPKDSSTISPHSIPE) is disordered. 2 consecutive Phorbol-ester/DAG-type zinc fingers follow at residues 134-185 (EHRF…TKPC) and 364-424 (IHTT…STSC).

Belongs to the DEF8 family.

In terms of biological role, positively regulates lysosome peripheral distribution and ruffled border formation in osteoclasts. Involved in bone resorption. The protein is Differentially expressed in FDCP 8 homolog A (def8-a) of Xenopus laevis (African clawed frog).